A 118-amino-acid chain; its full sequence is Large ribosomal subunit protein bL20 (118 aa).

This sequence belongs to the bacterial ribosomal protein bL20 family.

In terms of biological role, binds directly to 23S ribosomal RNA and is necessary for the in vitro assembly process of the 50S ribosomal subunit. It is not involved in the protein synthesizing functions of that subunit. The protein is Large ribosomal subunit protein bL20 of Sulfurihydrogenibium sp. (strain YO3AOP1).